The following is a 630-amino-acid chain: Long-chain-fatty-acid--AMP ligase FadD32 (630 aa).

ATP is bound by residues 187-192, S342, A346, D469, and R483; that span reads TSGSTR.

This sequence belongs to the ATP-dependent AMP-binding enzyme family. Monomer.

The catalysed reaction is a long-chain fatty acid + holo-[ACP] + ATP = a long-chain fatty acyl-[ACP] + AMP + diphosphate. It catalyses the reaction decanoate + ATP + H(+) = decanoyl-AMP + diphosphate. It carries out the reaction dodecanoate + ATP + H(+) = dodecanoyl-AMP + diphosphate. The enzyme catalyses tetradecanoate + ATP + H(+) = tetradecanoyl-AMP + diphosphate. Its pathway is lipid metabolism; mycolic acid biosynthesis. The acyl-AMP ligase activity is inhibited by the alkylphosphate ester of AMP, adenosine 50-dodecylphosphate (AMPC12). Also inhibited by eicosyl-AMP (AMPC20). Functionally, involved in the biosynthesis of mycolic acids. Catalyzes the activation of long-chain fatty acids as acyl-adenylates (acyl-AMP), which are then transferred to the phosphopantetheine arm of the polyketide synthase Pks13 for further chain extension. Can use decanoate (C10), dodecanoate (C12) and tetradecanoate (C14). The chain is Long-chain-fatty-acid--AMP ligase FadD32 from Mycolicibacterium smegmatis (strain ATCC 700084 / mc(2)155) (Mycobacterium smegmatis).